A 151-amino-acid polypeptide reads, in one-letter code: UPF0178 protein ESA_02916 (151 aa).

It belongs to the UPF0178 family.

This chain is UPF0178 protein ESA_02916, found in Cronobacter sakazakii (strain ATCC BAA-894) (Enterobacter sakazakii).